The primary structure comprises 983 residues: Nitrate reductase [NADPH] (983 aa).

Low complexity-rich tracts occupy residues 1-14 (MTIS…SSKT) and 26-48 (SSSS…SSPT). Positions 1–50 (MTISTTSSSTSSKTSSEKGDDLKGFSSSSSPASSRSSSATTPEPSSPTVL) are disordered. Mo-molybdopterin is bound at residue cysteine 184. The 78-residue stretch at 585–662 (DTIITAADLA…LRDFHLGRLE (78 aa)) folds into the Cytochrome b5 heme-binding domain. 2 residues coordinate heme: histidine 622 and histidine 645. Positions 688–815 (KKWRATRLVS…KGPLGSFTYL (128 aa)) constitute an FAD-binding FR-type domain. FAD is bound by residues 746–749 (RAYT), 763–767 (LIKVY), phenylalanine 768, phenylalanine 780, 784–786 (KMT), serine 841, and threonine 844. NADP(+) is bound at residue 952-961 (LALVCGPPPM).

The protein belongs to the nitrate reductase family. In terms of assembly, homodimer. The cofactor is FAD. Heme is required as a cofactor. It depends on Mo-molybdopterin as a cofactor.

It carries out the reaction nitrite + NADP(+) + H2O = nitrate + NADPH + H(+). It functions in the pathway nitrogen metabolism; nitrate reduction (assimilation). In terms of biological role, nitrate reductase is a key enzyme involved in the first step of nitrate assimilation in plants, fungi and bacteria. The polypeptide is Nitrate reductase [NADPH] (NAR1) (Mycosarcoma maydis (Corn smut fungus)).